We begin with the raw amino-acid sequence, 493 residues long: UDP-N-acetylmuramoyl-L-alanyl-D-glutamate--2,6-diaminopimelate ligase (493 aa).

Residue S30 participates in UDP-N-acetyl-alpha-D-muramoyl-L-alanyl-D-glutamate binding. 114–120 (GTNGKTS) is an ATP binding site. UDP-N-acetyl-alpha-D-muramoyl-L-alanyl-D-glutamate-binding positions include 156-157 (TT), S183, Q189, and R191. Position 223 is an N6-carboxylysine (K223). Meso-2,6-diaminopimelate contacts are provided by residues R386, 410-413 (DNPR), G460, and E464. Residues 410 to 413 (DNPR) carry the Meso-diaminopimelate recognition motif motif.

It belongs to the MurCDEF family. MurE subfamily. Requires Mg(2+) as cofactor. In terms of processing, carboxylation is probably crucial for Mg(2+) binding and, consequently, for the gamma-phosphate positioning of ATP.

The protein resides in the cytoplasm. It catalyses the reaction UDP-N-acetyl-alpha-D-muramoyl-L-alanyl-D-glutamate + meso-2,6-diaminopimelate + ATP = UDP-N-acetyl-alpha-D-muramoyl-L-alanyl-gamma-D-glutamyl-meso-2,6-diaminopimelate + ADP + phosphate + H(+). It functions in the pathway cell wall biogenesis; peptidoglycan biosynthesis. Functionally, catalyzes the addition of meso-diaminopimelic acid to the nucleotide precursor UDP-N-acetylmuramoyl-L-alanyl-D-glutamate (UMAG) in the biosynthesis of bacterial cell-wall peptidoglycan. The protein is UDP-N-acetylmuramoyl-L-alanyl-D-glutamate--2,6-diaminopimelate ligase of Chromobacterium violaceum (strain ATCC 12472 / DSM 30191 / JCM 1249 / CCUG 213 / NBRC 12614 / NCIMB 9131 / NCTC 9757 / MK).